The sequence spans 405 residues: Pentatricopeptide repeat-containing protein At3g14580, mitochondrial (405 aa).

The transit peptide at 1-37 (MILRRLVLSATSNSNPRRSQSLSSSGVRILSSSSSDR) directs the protein to the mitochondrion. The disordered stretch occupies residues 13–44 (NSNPRRSQSLSSSGVRILSSSSSDRYTSSSQR). PPR repeat units lie at residues 94-124 (TESL…IKLE), 130-165 (SEEF…GCWP), 166-200 (SSKS…GVEI), 201-235 (DACC…KSRP), 236-270 (NVMT…RIEP), 271-305 (DTIT…GCEP), 306-340 (NPGT…GMRP), and 341-375 (SFLS…GFVP).

This sequence belongs to the PPR family. P subfamily.

Its subcellular location is the mitochondrion. This is Pentatricopeptide repeat-containing protein At3g14580, mitochondrial from Arabidopsis thaliana (Mouse-ear cress).